A 312-amino-acid polypeptide reads, in one-letter code: Holliday junction branch migration complex subunit RuvB (312 aa).

Residues 1–168 (MKTNYEFRPQ…FGHIFHLNEY (168 aa)) form a large ATPase domain (RuvB-L) region. ATP is bound by residues R8, G49, K52, T53, T54, 115 to 117 (EDF), R158, Y168, and R206. Mg(2+) is bound at residue T53. Residues 169–234 (EPSEISAIIL…DIKNIFKKIQ (66 aa)) are small ATPAse domain (RuvB-S). Residues 237–312 (EFGLDEQDIN…DFLKNNQLIK (76 aa)) are head domain (RuvB-H). Residues K290 and R295 each coordinate DNA.

It belongs to the RuvB family. In terms of assembly, homohexamer. Forms an RuvA(8)-RuvB(12)-Holliday junction (HJ) complex. HJ DNA is sandwiched between 2 RuvA tetramers; dsDNA enters through RuvA and exits via RuvB. An RuvB hexamer assembles on each DNA strand where it exits the tetramer. Each RuvB hexamer is contacted by two RuvA subunits (via domain III) on 2 adjacent RuvB subunits; this complex drives branch migration. In the full resolvosome a probable DNA-RuvA(4)-RuvB(12)-RuvC(2) complex forms which resolves the HJ.

Its subcellular location is the cytoplasm. It carries out the reaction ATP + H2O = ADP + phosphate + H(+). In terms of biological role, the RuvA-RuvB-RuvC complex processes Holliday junction (HJ) DNA during genetic recombination and DNA repair, while the RuvA-RuvB complex plays an important role in the rescue of blocked DNA replication forks via replication fork reversal (RFR). RuvA specifically binds to HJ cruciform DNA, conferring on it an open structure. The RuvB hexamer acts as an ATP-dependent pump, pulling dsDNA into and through the RuvAB complex. RuvB forms 2 homohexamers on either side of HJ DNA bound by 1 or 2 RuvA tetramers; 4 subunits per hexamer contact DNA at a time. Coordinated motions by a converter formed by DNA-disengaged RuvB subunits stimulates ATP hydrolysis and nucleotide exchange. Immobilization of the converter enables RuvB to convert the ATP-contained energy into a lever motion, pulling 2 nucleotides of DNA out of the RuvA tetramer per ATP hydrolyzed, thus driving DNA branch migration. The RuvB motors rotate together with the DNA substrate, which together with the progressing nucleotide cycle form the mechanistic basis for DNA recombination by continuous HJ branch migration. Branch migration allows RuvC to scan DNA until it finds its consensus sequence, where it cleaves and resolves cruciform DNA. In Ureaplasma parvum serovar 3 (strain ATCC 27815 / 27 / NCTC 11736), this protein is Holliday junction branch migration complex subunit RuvB.